The primary structure comprises 481 residues: Protein nucleotidyltransferase YdiU (481 aa).

ATP is bound by residues glycine 85, glycine 87, arginine 88, lysine 108, aspartate 120, glycine 121, arginine 172, and arginine 179. Catalysis depends on aspartate 248, which acts as the Proton acceptor. 2 residues coordinate Mg(2+): asparagine 249 and aspartate 258. Residue aspartate 258 participates in ATP binding.

It belongs to the SELO family. Mg(2+) serves as cofactor. Mn(2+) is required as a cofactor.

The catalysed reaction is L-seryl-[protein] + ATP = 3-O-(5'-adenylyl)-L-seryl-[protein] + diphosphate. It carries out the reaction L-threonyl-[protein] + ATP = 3-O-(5'-adenylyl)-L-threonyl-[protein] + diphosphate. It catalyses the reaction L-tyrosyl-[protein] + ATP = O-(5'-adenylyl)-L-tyrosyl-[protein] + diphosphate. The enzyme catalyses L-histidyl-[protein] + UTP = N(tele)-(5'-uridylyl)-L-histidyl-[protein] + diphosphate. The catalysed reaction is L-seryl-[protein] + UTP = O-(5'-uridylyl)-L-seryl-[protein] + diphosphate. It carries out the reaction L-tyrosyl-[protein] + UTP = O-(5'-uridylyl)-L-tyrosyl-[protein] + diphosphate. Nucleotidyltransferase involved in the post-translational modification of proteins. It can catalyze the addition of adenosine monophosphate (AMP) or uridine monophosphate (UMP) to a protein, resulting in modifications known as AMPylation and UMPylation. The protein is Protein nucleotidyltransferase YdiU of Cereibacter sphaeroides (strain ATCC 17025 / ATH 2.4.3) (Rhodobacter sphaeroides).